Consider the following 462-residue polypeptide: Zinc finger CCCH domain-containing protein 34 (462 aa).

Residues 1–13 (MERYGRPGEEGSR) are compositionally biased toward basic and acidic residues. A disordered region spans residues 1-26 (MERYGRPGEEGSRSDPSLEWTSHGGE). 3 C3H1-type zinc fingers span residues 54-82 (RPDEPDCIYYLRTGVCGYGSRCRFNHPRD), 100-128 (RMGHPVCQHFMRTGTCKFGASCKYHHPRQ), and 148-176 (RPGEKECSYYLRTGQCKFGLTCRFNHPVP). A compositionally biased stretch (polar residues) spans 288–303 (TGTYQSVPSSNSTSKE). Residues 288–310 (TGTYQSVPSSNSTSKEFPQRPDQ) form a disordered region. 2 C3H1-type zinc fingers span residues 307–335 (RPDQPECQYFMRTGDCKFGSSCRYHHPVD) and 353–381 (RPGVAQCTHFAQHGICKFGPACKFDHSMS). Low complexity predominate over residues 405–418 (SSSLSGSSAPVSSS). The tract at residues 405–462 (SSSLSGSSAPVSSSNEPTKEAVTPAVSSMVSGLSRPEPAETSGDSASVSGSIEAKTSS) is disordered. The segment covering 446–462 (SGDSASVSGSIEAKTSS) has biased composition (polar residues).

It localises to the nucleus. The chain is Zinc finger CCCH domain-containing protein 34 from Arabidopsis thaliana (Mouse-ear cress).